We begin with the raw amino-acid sequence, 351 residues long: DNA polymerase IV (351 aa).

One can recognise a UmuC domain in the interval 4 to 185; sequence IIHVDMDCFF…LPLEKIPGVG (182 aa). Residues D8 and D103 each contribute to the Mg(2+) site. Residue E104 is part of the active site.

Belongs to the DNA polymerase type-Y family. Monomer. Mg(2+) serves as cofactor.

It is found in the cytoplasm. The enzyme catalyses DNA(n) + a 2'-deoxyribonucleoside 5'-triphosphate = DNA(n+1) + diphosphate. In terms of biological role, poorly processive, error-prone DNA polymerase involved in untargeted mutagenesis. Copies undamaged DNA at stalled replication forks, which arise in vivo from mismatched or misaligned primer ends. These misaligned primers can be extended by PolIV. Exhibits no 3'-5' exonuclease (proofreading) activity. May be involved in translesional synthesis, in conjunction with the beta clamp from PolIII. The protein is DNA polymerase IV of Shigella flexneri.